Consider the following 540-residue polypeptide: Cytosolic carboxypeptidase 6 (540 aa).

Residues 167 to 438 enclose the Peptidase M14 domain; that stretch reads YPYTYTRFQH…NVARTFLDYY (272 aa). The Zn(2+) site is built by His230, Glu233, and His328. The Proton donor/acceptor role is filled by Glu401.

Belongs to the peptidase M14 family. As to quaternary structure, interacts with MYLK. Zn(2+) is required as a cofactor. As to expression, widely expressed. Expressed abundantly in testis, pituitary and brain and to a lower extent in eye, stomach, adrenal and kidney. In brain, expressed at low level in cerebellum as compared to cortex.

The protein resides in the cytoplasm. Its subcellular location is the cytosol. It is found in the cytoskeleton. The protein localises to the microtubule organizing center. It localises to the centrosome. The protein resides in the centriole. Its subcellular location is the golgi apparatus. It is found in the cilium basal body. It carries out the reaction (L-glutamyl)(n+1)-gamma-L-glutamyl-L-glutamyl-[protein] + H2O = (L-glutamyl)(n)-gamma-L-glutamyl-L-glutamyl-[protein] + L-glutamate. It catalyses the reaction C-terminal L-alpha-aminoacyl-L-glutamyl-L-glutamyl-[tubulin] + H2O = C-terminal L-alpha-aminoacyl-L-glutamyl-[tubulin] + L-glutamate. Its function is as follows. Metallocarboxypeptidase that mediates protein deglutamylation of tubulin and non-tubulin target proteins. Catalyzes the removal of polyglutamate side chains present on the gamma-carboxyl group of glutamate residues within the C-terminal tail of tubulin protein. Specifically cleaves tubulin long-side-chains, while it is not able to remove the branching point glutamate. Also catalyzes the removal of polyglutamate residues from the carboxy-terminus of non-tubulin proteins such as MYLK. Mediates the deglutamylation of nucleotidyltransferase CGAS, leading to CGAS antiviral defense response activation. Involved in KLF4 deglutamylation which promotes KLF4 proteasome-mediated degradation, thereby negatively regulating cell pluripotency maintenance and embryogenesis. In Mus musculus (Mouse), this protein is Cytosolic carboxypeptidase 6.